We begin with the raw amino-acid sequence, 432 residues long: Trigger factor (432 aa).

Positions 161-246 (EDRVTIDFTG…LKKVEERELP (86 aa)) constitute a PPIase FKBP-type domain.

It belongs to the FKBP-type PPIase family. Tig subfamily. In terms of assembly, homodimer and monomer. In vivo most of the ribosomes are in complex with monomeric TF. Uncomplexed TF, however, is in a monomer-dimer equilibrium with approximately two thirds of TF existing in a dimeric state.

Its subcellular location is the cytoplasm. The enzyme catalyses [protein]-peptidylproline (omega=180) = [protein]-peptidylproline (omega=0). Functionally, involved in protein export. Acts as a chaperone by maintaining the newly synthesized protein in an open conformation. Functions as a peptidyl-prolyl cis-trans isomerase. The sequence is that of Trigger factor from Escherichia coli O139:H28 (strain E24377A / ETEC).